The following is a 605-amino-acid chain: Isocitrate dehydrogenase kinase/phosphatase (605 aa).

ATP-binding positions include 327 to 333 (APGIKGL) and K348. D383 is an active-site residue.

It belongs to the AceK family.

The protein localises to the cytoplasm. The catalysed reaction is L-seryl-[isocitrate dehydrogenase] + ATP = O-phospho-L-seryl-[isocitrate dehydrogenase] + ADP + H(+). Its function is as follows. Bifunctional enzyme which can phosphorylate or dephosphorylate isocitrate dehydrogenase (IDH) on a specific serine residue. This is a regulatory mechanism which enables bacteria to bypass the Krebs cycle via the glyoxylate shunt in response to the source of carbon. When bacteria are grown on glucose, IDH is fully active and unphosphorylated, but when grown on acetate or ethanol, the activity of IDH declines drastically concomitant with its phosphorylation. The sequence is that of Isocitrate dehydrogenase kinase/phosphatase from Burkholderia lata (strain ATCC 17760 / DSM 23089 / LMG 22485 / NCIMB 9086 / R18194 / 383).